Reading from the N-terminus, the 177-residue chain is Large ribosomal subunit protein uL6 (177 aa).

It belongs to the universal ribosomal protein uL6 family. In terms of assembly, part of the 50S ribosomal subunit.

In terms of biological role, this protein binds to the 23S rRNA, and is important in its secondary structure. It is located near the subunit interface in the base of the L7/L12 stalk, and near the tRNA binding site of the peptidyltransferase center. The sequence is that of Large ribosomal subunit protein uL6 from Bartonella quintana (strain Toulouse) (Rochalimaea quintana).